We begin with the raw amino-acid sequence, 211 residues long: Small ribosomal subunit protein uS3 (211 aa).

In terms of domain architecture, KH type-2 spans 38–106 (LRNFLKKRLY…EVYLNIQEVR (69 aa)).

It belongs to the universal ribosomal protein uS3 family. In terms of assembly, part of the 30S ribosomal subunit. Forms a tight complex with proteins S10 and S14.

In terms of biological role, binds the lower part of the 30S subunit head. Binds mRNA in the 70S ribosome, positioning it for translation. In Citrifermentans bemidjiense (strain ATCC BAA-1014 / DSM 16622 / JCM 12645 / Bem) (Geobacter bemidjiensis), this protein is Small ribosomal subunit protein uS3.